The chain runs to 549 residues: Cation/acetate symporter ActP (549 aa).

Helical transmembrane passes span 33-53, 77-97, 103-123, 148-168, 183-203, 206-226, 262-282, 303-323, 355-375, 404-424, 428-448, 464-484, and 493-513; these read WQAI…TYWA, LAIA…ALVF, GLIY…LIAE, ILSA…QMVG, IAVV…GMLA, WVQI…AFMV, ISAL…PHIL, GFMG…IMLV, LFLG…VAGL, VSKI…VLFE, IAFM…PIIL, GGWL…TIWV, and IFPY…GIWF.

This sequence belongs to the sodium:solute symporter (SSF) (TC 2.A.21) family.

It is found in the cell inner membrane. In terms of biological role, transports acetate. The chain is Cation/acetate symporter ActP from Escherichia fergusonii (strain ATCC 35469 / DSM 13698 / CCUG 18766 / IAM 14443 / JCM 21226 / LMG 7866 / NBRC 102419 / NCTC 12128 / CDC 0568-73).